The primary structure comprises 244 residues: Tetraspanin-1 (244 aa).

The next 4 membrane-spanning stretches (helical) occupy residues 11–31 (VLFF…AVGF), 67–87 (LIVV…TAVL), 104–124 (YLVL…AVLV), and 198–218 (ILLV…PILI).

It belongs to the tetraspanin (TM4SF) family.

The protein localises to the membrane. This Caenorhabditis elegans protein is Tetraspanin-1 (tsp-1).